Reading from the N-terminus, the 445-residue chain is uncharacterized protein (445 aa).

The interval 139-160 (TESQKDLEYERKANKTKEENQQ) is disordered.

This is an uncharacterized protein from Mycoplasma pneumoniae (strain ATCC 29342 / M129 / Subtype 1) (Mycoplasmoides pneumoniae).